Here is a 267-residue protein sequence, read N- to C-terminus: MRLEGKVALVTGGASGIGESIARLFIEHGAKICIVDVQDELGQQVSQRLGGDPHACYFHCDVTVEDDVRRAVDFTAEKYGTIDIMVNNAGITGDKVIDIRDADFNEFKKVFDINVNGVFLGMKHAARIMIPKMKGSIVSLASVSSVIAGAGPHGYTGAKHAVVGLTKSVAAELGRHGIRVNCVSPYAVPTRLSMPYLPESEMQEDALRGFLTFVRSNANLKGVDLMPNDVAEAVLYLATEESKYVSGLNLVIDGGFSIANHTLQVFE.

Residue 9 to 33 coordinates NAD(+); it reads LVTGGASGIGESIARLFIEHGAKIC. Residue serine 142 coordinates substrate. Tyrosine 155 (proton acceptor) is an active-site residue.

Belongs to the short-chain dehydrogenases/reductases (SDR) family. Expressed in leaves, stems and rhizomes.

The catalysed reaction is 10-hydroxy-alpha-humulene + NAD(+) = zerumbone + NADH + H(+). Catalyzes 8-hydroxy-alpha-humulene into zerumbone in presence of NAD. Also converts borneol to camphor in vitro. Zerumbone is a highly promising multi-anticancer agent. The protein is Zerumbone synthase (ZSD1) of Zingiber zerumbet (Shampoo ginger).